The chain runs to 144 residues: Large ribosomal subunit protein uL16 (144 aa).

This sequence belongs to the universal ribosomal protein uL16 family. In terms of assembly, part of the 50S ribosomal subunit.

Functionally, binds 23S rRNA and is also seen to make contacts with the A and possibly P site tRNAs. In Bacillus pumilus (strain SAFR-032), this protein is Large ribosomal subunit protein uL16.